Here is a 173-residue protein sequence, read N- to C-terminus: Probable chemoreceptor glutamine deamidase CheD 2 (173 aa).

The protein belongs to the CheD family.

It carries out the reaction L-glutaminyl-[protein] + H2O = L-glutamyl-[protein] + NH4(+). Probably deamidates glutamine residues to glutamate on methyl-accepting chemotaxis receptors (MCPs), playing an important role in chemotaxis. In Albidiferax ferrireducens (strain ATCC BAA-621 / DSM 15236 / T118) (Rhodoferax ferrireducens), this protein is Probable chemoreceptor glutamine deamidase CheD 2.